A 429-amino-acid chain; its full sequence is UDP-N-acetylglucosamine 1-carboxyvinyltransferase (429 aa).

22-23 (KN) lines the phosphoenolpyruvate pocket. Arginine 102 contributes to the UDP-N-acetyl-alpha-D-glucosamine binding site. The active-site Proton donor is the cysteine 126. Cysteine 126 is subject to 2-(S-cysteinyl)pyruvic acid O-phosphothioketal. UDP-N-acetyl-alpha-D-glucosamine is bound by residues 131-135 (RPVDL), 171-174 (KVSV), aspartate 316, and isoleucine 338.

This sequence belongs to the EPSP synthase family. MurA subfamily.

It is found in the cytoplasm. It carries out the reaction phosphoenolpyruvate + UDP-N-acetyl-alpha-D-glucosamine = UDP-N-acetyl-3-O-(1-carboxyvinyl)-alpha-D-glucosamine + phosphate. It participates in cell wall biogenesis; peptidoglycan biosynthesis. Cell wall formation. Adds enolpyruvyl to UDP-N-acetylglucosamine. The protein is UDP-N-acetylglucosamine 1-carboxyvinyltransferase of Chelativorans sp. (strain BNC1).